Consider the following 421-residue polypeptide: MAGEAEAQLDPSLQGLVMFEDVTVYFSREEWGLLNVTQKGLYRDVMLENFALVSSLGLAPSRSPVFTQLEDDEQSWVPSWVDVTPVSRAEARRGFGLDGLCRVEDERAHPEHLKSYRVIQHQDTHSEGKPRRHTEHGAAFPPGSSCGQQQEVHVAEKLFKCSDCGKVFLKAFALLDHLITHSEERPFRCPTGRSAFKKSAHINPRKIHTGETAHVCNECGKAFSYPSKLRKHQKVHTGIKPFKCSDCGKTFNRKDALVLHQRIHTGERPYECSKCGKTFSVLSTLIRHRKVHIGERPYECTECGKFFKYNNSFILHQRVHTGERPFECKQCGKGYVTRSGLYQHWKVHTGERPYECSLCGKTFTTRSYRNRHQQFHTEERSYECTECGKAFKHSSTLLQHKKVHTPERRQEDRAHGKVVSC.

Positions 17–88 constitute a KRAB domain; the sequence is VMFEDVTVYF…SWVDVTPVSR (72 aa). Positions 120-129 are enriched in basic and acidic residues; the sequence is QHQDTHSEGK. The interval 120–146 is disordered; sequence QHQDTHSEGKPRRHTEHGAAFPPGSSC. C2H2-type zinc fingers lie at residues 159 to 181, 214 to 236, 242 to 264, 270 to 292, 298 to 320, 326 to 348, 354 to 376, and 382 to 404; these read FKCS…LITH, HVCN…QKVH, FKCS…QRIH, YECS…RKVH, YECT…QRVH, FECK…WKVH, YECS…QQFH, and YECT…KKVH. Residues 402–421 are disordered; sequence KVHTPERRQEDRAHGKVVSC. The span at 404-415 shows a compositional bias: basic and acidic residues; that stretch reads HTPERRQEDRAH.

The protein belongs to the krueppel C2H2-type zinc-finger protein family.

It is found in the nucleus. In terms of biological role, may be involved in transcriptional regulation. In Homo sapiens (Human), this protein is Zinc finger protein 584 (ZNF584).